A 473-amino-acid polypeptide reads, in one-letter code: H(+)/Cl(-) exchange transporter ClcA (473 aa).

Over 1–32 (MKTDTPSLETPQAARLRRRQLIRQLLERDKTP) the chain is Cytoplasmic. A helical membrane pass occupies residues 33 to 69 (LAILFMAAVVGTLVGLAAVAFDKGVAWLQNQRMGALV). Residues 70–76 (HTADNYP) lie on the Periplasmic side of the membrane. The helical transmembrane segment at 77 to 100 (LLLTVAFLCSAVLAMFGYFLVRKY) threads the bilayer. The short motif at 106–110 (GSGIP) is the Selectivity filter part_1 element. Ser107 is a chloride binding site. The helical intramembrane region spans 109 to 116 (IPEIEGAL). The Cytoplasmic segment spans residues 117–123 (EDQRPVR). Transmembrane regions (helical) follow at residues 124-141 (WWRVLPVKFFGGLGTLGG) and 148-166 (EGPTVQIGGNIGRMVLDVF). A Selectivity filter part_2 motif is present at residues 146–150 (GREGP). The Cytoplasmic segment spans residues 167 to 176 (RLKGDEARHT). 2 intramembrane regions (helical) span residues 177–189 (LLATGAAAGLAAA) and 193–201 (PLAGILFII). Residues 202 to 214 (EEMRPQFRYTLIS) lie on the Cytoplasmic side of the membrane. Residues 215-232 (IKAVFIGVIMSTIMYRIF) traverse the membrane as a helical segment. Residues 233–252 (NHEVALIDVGKLSDAPLNTL) lie on the Periplasmic side of the membrane. A helical transmembrane segment spans residues 253–281 (WLYLILGIIFGIFGPIFNKWVLGMQDLLH). Topologically, residues 282 to 287 (RVHGGN) are cytoplasmic. A helical membrane pass occupies residues 288-309 (ITKWVLMGGAIGGLCGLLGFVA). Residues 310–329 (PATSGGGFNLIPIATAGNFS) are Periplasmic-facing. Helical transmembrane passes span 330–349 (MGMLVFIFVARVITTLLCFS) and 355–376 (GIFAPMLALGTVLGTAFGMVAV). The Selectivity filter part_3 motif lies at 355 to 359 (GIFAP). Ile356 and Phe357 together coordinate chloride. The Periplasmic portion of the chain corresponds to 377–386 (ELFPQYHLEA). Positions 387-401 (GTFAIAGMGALLAAS) form an intramembrane region, helical. The segment at residues 402-404 (IRA) is an intramembrane region (note=Loop between two helices). The segment at residues 405 to 416 (PLTGIILVLEMT) is an intramembrane region (helical). Positions 417-421 (DNYQL) form an intramembrane region, note=Loop between two helices. The chain crosses the membrane as a helical span at residues 422–438 (ILPMIITGLGATLLAQF). At 439-473 (TGGKPLYSAILARTLAKQEAEQLARSKAASASENT) the chain is on the cytoplasmic side. Tyr445 contacts chloride.

This sequence belongs to the chloride channel (TC 2.A.49) family. ClcA subfamily. Homodimer.

It localises to the cell inner membrane. The enzyme catalyses 2 chloride(in) + H(+)(out) = 2 chloride(out) + H(+)(in). Functionally, proton-coupled chloride transporter. Functions as antiport system and exchanges two chloride ions for 1 proton. Probably acts as an electrical shunt for an outwardly-directed proton pump that is linked to amino acid decarboxylation, as part of the extreme acid resistance (XAR) response. The sequence is that of H(+)/Cl(-) exchange transporter ClcA from Escherichia coli O157:H7.